The sequence spans 306 residues: Ornithine carbamoyltransferase (306 aa).

Carbamoyl phosphate-binding positions include 53 to 56, glutamine 80, arginine 104, and 131 to 134; these read STRT and HPCQ. L-ornithine is bound by residues asparagine 162, aspartate 219, and 223-224; that span reads SM. Carbamoyl phosphate is bound by residues 259 to 260 and arginine 287; that span reads CL.

This sequence belongs to the aspartate/ornithine carbamoyltransferase superfamily. OTCase family.

It localises to the cytoplasm. The enzyme catalyses carbamoyl phosphate + L-ornithine = L-citrulline + phosphate + H(+). It participates in amino-acid biosynthesis; L-arginine biosynthesis; L-arginine from L-ornithine and carbamoyl phosphate: step 1/3. Its function is as follows. Reversibly catalyzes the transfer of the carbamoyl group from carbamoyl phosphate (CP) to the N(epsilon) atom of ornithine (ORN) to produce L-citrulline. In Acinetobacter baylyi (strain ATCC 33305 / BD413 / ADP1), this protein is Ornithine carbamoyltransferase.